A 280-amino-acid chain; its full sequence is Transmembrane protein 45B (280 aa).

7 consecutive transmembrane segments (helical) span residues 7–27, 49–69, 96–116, 120–140, 150–170, 184–204, and 216–236; these read HALP…KYPL, LIEG…EQFV, MYLF…PLNL, LDRL…YYHV, IHSL…IEVF, LTIL…PLGG, and VMFI…IMAI.

The protein belongs to the TMEM45 family.

The protein resides in the membrane. The sequence is that of Transmembrane protein 45B (tmem45b) from Xenopus tropicalis (Western clawed frog).